A 229-amino-acid polypeptide reads, in one-letter code: Gene 1 protein (229 aa).

This is Gene 1 protein (1) from Mycobacterium phage L5 (Mycobacteriophage L5).